A 201-amino-acid chain; its full sequence is Large ribosomal subunit protein uL4 (201 aa).

Positions 44–68 (RAQKSRAEVSGSGRKPWRQKGTGRA) are disordered.

Belongs to the universal ribosomal protein uL4 family. As to quaternary structure, part of the 50S ribosomal subunit.

Its function is as follows. One of the primary rRNA binding proteins, this protein initially binds near the 5'-end of the 23S rRNA. It is important during the early stages of 50S assembly. It makes multiple contacts with different domains of the 23S rRNA in the assembled 50S subunit and ribosome. Forms part of the polypeptide exit tunnel. This chain is Large ribosomal subunit protein uL4, found in Buchnera aphidicola subsp. Acyrthosiphon pisum (strain APS) (Acyrthosiphon pisum symbiotic bacterium).